A 1024-amino-acid polypeptide reads, in one-letter code: MARHGPPWSRLDAQQERDVRELVRGVAGLQDEADPNFQLALNFAWSNFRFHRFLDVNSHKIEKTIEGIYEKFVIHSDLSKAASWKRLTEEFLNAPLPSIKEIKTDAHYSILSLLLCLSDSPSNSSYVETPRNKEVEKKDDFDWGKYLMEDEEMDIGPYMDTPNWSEESEEENDQQPLSREDSGIQVDRTPLEEQDQNRKLDPCISWKDEPDDRSWLEHHVVHQYWTARPSQFPHSLHLHSNLAAVWDQHLYSSDPLYVPDDRVLVTETQVIRETLWLLSGVKKLFIFQLIDGKVTVRNNIIVTHLTHSCLRSVLEQIAAYGQVVFRLQEFIDEVMGHSSESMLPGSGSVPKKSTEAPFRTYQAFMWALYKYFISFKEELAEIEKCIINNDTTITLAIVVDKLAPRLSQLKVLHKVFSTGVAEVPPDTRNVVRASHLLNTLYKAILEYDNVGEASEQTVSLLFSLWVETVRPYLQTVDEWIVHGHLWDGAREFIIQRNKNVPVNHRDFWYATYTLYSVSEKTENEEKMSDNASASSGSDQGPSSRQHTMVSFLKPVLKQIIMAGKSMQLLKNLQCAESTTCQAGARDAERKSLYTLFLESVQSRLRHGEDSTPQVLTEQQATKENLMKMQSIAESHLELDDVHDPLLAINFARMYLEQSDFHEKFAGGDVCVDRSSESVTCQTFELTLRSCLYPHIDKQYLDCCGNLMQTLKKDYRLVEYLQAMRNFFLMEGGDTMYDFYTSIFDKIREKETWQNVSFLNVQLQEAVGQRYPEDSSRLSISFENVDTAKKKLPVHILDGLTLSYKVPWPVDIVISLECQKIYNQVFLLLLQIKWAKYSLDVLLFGELVSTAEKPRLKEGLIHEQDTVAQFGPQKEPVRQQIHRMFLLRVKLMHFVNSLHNYIMTRILHSTGLEFQHQVEEAKDLDQLIKIHYRYLSTIHDRCLLREKVSFVKEAIMKVLNLALMFADGWQAGLGTWRMESIEKMESDFKNCHMFLVTILNKAVCRGSFPHLESLALSLMAGMEQS.

2 disordered regions span residues 155–203 and 521–545; these read IGPY…LDPC and TENEEKMSDNASASSGSDQGPSSRQ. Basic and acidic residues predominate over residues 189–203; the sequence is TPLEEQDQNRKLDPC. Residues 531–543 are compositionally biased toward low complexity; the sequence is ASASSGSDQGPSS.

Belongs to the TUBGCP family. As to quaternary structure, component of the gamma-tubulin ring complex (gTuRC) consisting of TUBGCP2, TUBGCP3, TUBGCP4, TUBGCP5 and TUBGCP6 and gamma-tubulin TUBG1 or TUBG2. TUBGCP2, TUBGCP3, TUBGCP4, TUBGCP5 and TUBGCP6 assemble in a 5:5:2:1:1 stoichiometry; each is associated with a gamma-tubulin, thereby arranging 14 gamma-tubulins in a helical manner. Gamma-tubulin at the first position is blocked by TUBGCP3 at the last position, allowing 13 protafilaments to grow into a microtubule. The gTuRC (via TUBGCP3 and TUBGCP6) interacts with ACTB and MZT1; the interactions form a luminal bridge that stabilizes the initial structure during complex assembly. The gTuRC (via TUBGCP2) interacts with MZT2A/MZT2B and CDK5RAP2 (via CM1 motif); the interactions play a role in gTuRC activation. As to expression, widely expressed, with highest levels in heart and skeletal muscle and moderate levels in brain.

Its subcellular location is the cytoplasm. It localises to the cytoskeleton. The protein resides in the microtubule organizing center. The protein localises to the centrosome. In terms of biological role, component of the gamma-tubulin ring complex (gTuRC) which mediates microtubule nucleation. The gTuRC regulates the minus-end nucleation of alpha-beta tubulin heterodimers that grow into microtubule protafilaments, a critical step in centrosome duplication and spindle formation. This chain is Gamma-tubulin complex component 5 (TUBGCP5), found in Homo sapiens (Human).